The sequence spans 191 residues: Holliday junction branch migration complex subunit RuvA (191 aa).

The tract at residues 1–64 (MIGSITGNVE…DNITQLYGFL (64 aa)) is domain I. Residues 65-142 (NRQEQDYFKM…KMPIEETFSI (78 aa)) form a domain II region. The tract at residues 143–146 (IEND) is flexible linker. The domain III stretch occupies residues 146–191 (DDSLAALISLGYEKLKAFNVIQEIKSKTPDASTQEVIRKALQKLSQ).

It belongs to the RuvA family. As to quaternary structure, homotetramer. Forms an RuvA(8)-RuvB(12)-Holliday junction (HJ) complex. HJ DNA is sandwiched between 2 RuvA tetramers; dsDNA enters through RuvA and exits via RuvB. An RuvB hexamer assembles on each DNA strand where it exits the tetramer. Each RuvB hexamer is contacted by two RuvA subunits (via domain III) on 2 adjacent RuvB subunits; this complex drives branch migration. In the full resolvosome a probable DNA-RuvA(4)-RuvB(12)-RuvC(2) complex forms which resolves the HJ.

The protein resides in the cytoplasm. In terms of biological role, the RuvA-RuvB-RuvC complex processes Holliday junction (HJ) DNA during genetic recombination and DNA repair, while the RuvA-RuvB complex plays an important role in the rescue of blocked DNA replication forks via replication fork reversal (RFR). RuvA specifically binds to HJ cruciform DNA, conferring on it an open structure. The RuvB hexamer acts as an ATP-dependent pump, pulling dsDNA into and through the RuvAB complex. HJ branch migration allows RuvC to scan DNA until it finds its consensus sequence, where it cleaves and resolves the cruciform DNA. The sequence is that of Holliday junction branch migration complex subunit RuvA from Ehrlichia ruminantium (strain Gardel).